Consider the following 459-residue polypeptide: Argininosuccinate lyase (459 aa).

Belongs to the lyase 1 family. Argininosuccinate lyase subfamily.

The protein resides in the cytoplasm. It catalyses the reaction 2-(N(omega)-L-arginino)succinate = fumarate + L-arginine. It functions in the pathway amino-acid biosynthesis; L-arginine biosynthesis; L-arginine from L-ornithine and carbamoyl phosphate: step 3/3. The polypeptide is Argininosuccinate lyase (Lactococcus lactis subsp. cremoris (strain SK11)).